The primary structure comprises 106 residues: Small ribosomal subunit protein bS18 (106 aa).

The segment at 1 to 41 (MAEEHSNQRSQTFNGERTNRPSRKPRGDGERRGRRQGGRRR) is disordered.

This sequence belongs to the bacterial ribosomal protein bS18 family. As to quaternary structure, part of the 30S ribosomal subunit. Forms a tight heterodimer with protein bS6.

Its function is as follows. Binds as a heterodimer with protein bS6 to the central domain of the 16S rRNA, where it helps stabilize the platform of the 30S subunit. The chain is Small ribosomal subunit protein bS18 from Oenococcus oeni (strain ATCC BAA-331 / PSU-1).